A 332-amino-acid polypeptide reads, in one-letter code: Ketol-acid reductoisomerase (NADP(+)) (332 aa).

Positions 1 to 182 constitute a KARI N-terminal Rossmann domain; that stretch reads MAQTWKDTDI…GSARAGLIKT (182 aa). NADP(+) contacts are provided by residues 25–28, Lys-48, Ser-53, and 83–86; these read YGIQ and DMIQ. His-108 is an active-site residue. Position 134 (Gly-134) interacts with NADP(+). Positions 183 to 329 constitute a KARI C-terminal knotted domain; sequence AFKEEVETDW…KEMRKMMWPD (147 aa). Residues Asp-191, Glu-195, Glu-227, and Glu-231 each contribute to the Mg(2+) site. Position 252 (Ser-252) interacts with substrate.

It belongs to the ketol-acid reductoisomerase family. Mg(2+) is required as a cofactor.

The enzyme catalyses (2R)-2,3-dihydroxy-3-methylbutanoate + NADP(+) = (2S)-2-acetolactate + NADPH + H(+). The catalysed reaction is (2R,3R)-2,3-dihydroxy-3-methylpentanoate + NADP(+) = (S)-2-ethyl-2-hydroxy-3-oxobutanoate + NADPH + H(+). It functions in the pathway amino-acid biosynthesis; L-isoleucine biosynthesis; L-isoleucine from 2-oxobutanoate: step 2/4. Its pathway is amino-acid biosynthesis; L-valine biosynthesis; L-valine from pyruvate: step 2/4. Functionally, involved in the biosynthesis of branched-chain amino acids (BCAA). Catalyzes an alkyl-migration followed by a ketol-acid reduction of (S)-2-acetolactate (S2AL) to yield (R)-2,3-dihydroxy-isovalerate. In the isomerase reaction, S2AL is rearranged via a Mg-dependent methyl migration to produce 3-hydroxy-3-methyl-2-ketobutyrate (HMKB). In the reductase reaction, this 2-ketoacid undergoes a metal-dependent reduction by NADPH to yield (R)-2,3-dihydroxy-isovalerate. This is Ketol-acid reductoisomerase (NADP(+)) from Nitrosopumilus maritimus (strain SCM1).